Reading from the N-terminus, the 356-residue chain is GTPase Obg (356 aa).

The 159-residue stretch at 2-160 (ESFVDEVAIE…KFLRLSLKLL (159 aa)) folds into the Obg domain. The OBG-type G domain maps to 161–329 (ADVGIVGLPN…LLENMDEVFF (169 aa)). Residues 167–174 (GLPNAGKS), 192–196 (FTTLS), 215–218 (DIPG), 282–285 (NKID), and 310–312 (SAD) contribute to the GTP site. Mg(2+) contacts are provided by serine 174 and threonine 194.

It belongs to the TRAFAC class OBG-HflX-like GTPase superfamily. OBG GTPase family. Monomer. Mg(2+) is required as a cofactor.

The protein resides in the cytoplasm. In terms of biological role, an essential GTPase which binds GTP, GDP and possibly (p)ppGpp with moderate affinity, with high nucleotide exchange rates and a fairly low GTP hydrolysis rate. Plays a role in control of the cell cycle, stress response, ribosome biogenesis and in those bacteria that undergo differentiation, in morphogenesis control. The chain is GTPase Obg from Leptospira interrogans serogroup Icterohaemorrhagiae serovar copenhageni (strain Fiocruz L1-130).